Reading from the N-terminus, the 568-residue chain is Dual specificity tyrosine-phosphorylation-regulated kinase 3 (568 aa).

Residues 1-168 (MKWKEKLGDG…HGVIGGPNNG (168 aa)) form a disordered region. Residues 77-114 (SNTVQSDGISDSEKCSPTVSQGKSSDCLNTVKSNSSSK) are compositionally biased toward polar residues. One can recognise a Protein kinase domain in the interval 189–502 (YEVLKIIGKG…PAQALRHPWI (314 aa)). ATP is bound by residues 195–203 (IGKGSFGQV) and Lys-218. Asp-315 functions as the Proton acceptor in the catalytic mechanism. Ser-330 is modified (phosphoserine). Residue Tyr-349 is modified to Phosphotyrosine. The Nuclear localization signal motif lies at 448–461 (RSRRGKKRGPPGSK).

The protein belongs to the protein kinase superfamily. CMGC Ser/Thr protein kinase family. MNB/DYRK subfamily. As to quaternary structure, interacts with SIRT1. Mg(2+) serves as cofactor. Protein kinase activity is activated following autophosphorylation at Tyr-349. Autophosphorylation at Ser-330 stabilizes the protein and enhances the protein kinase activity. Post-translationally, ubiquitinated at anaphase by the anaphase-promoting complex (APC/C), leading to its degradation by the proteasome.

It is found in the nucleus. The protein localises to the cytoplasm. Its subcellular location is the nucleus speckle. The protein resides in the cytoplasmic granule. It localises to the cytoskeleton. It is found in the microtubule organizing center. The protein localises to the centrosome. It carries out the reaction L-seryl-[protein] + ATP = O-phospho-L-seryl-[protein] + ADP + H(+). It catalyses the reaction L-threonyl-[protein] + ATP = O-phospho-L-threonyl-[protein] + ADP + H(+). The catalysed reaction is L-tyrosyl-[protein] + ATP = O-phospho-L-tyrosyl-[protein] + ADP + H(+). Its activity is regulated as follows. Protein kinase activity is activated following autophosphorylation at Tyr-349. Functionally, dual-specificity protein kinase that promotes disassembly of several types of membraneless organelles during mitosis, such as stress granules, nuclear speckles and pericentriolar material. Dual-specificity tyrosine-regulated kinases (DYRKs) autophosphorylate a critical tyrosine residue in their activation loop and phosphorylate their substrate on serine and threonine residues. Acts as a central dissolvase of membraneless organelles during the G2-to-M transition, after the nuclear-envelope breakdown: acts by mediating phosphorylation of multiple serine and threonine residues in unstructured domains of proteins, such as SRRM1 and PCM1. Does not mediate disassembly of all membraneless organelles: disassembly of P-body and nucleolus is not regulated by DYRK3. Dissolution of membraneless organelles at the onset of mitosis is also required to release mitotic regulators, such as ZNF207, from liquid-unmixed organelles where they are sequestered and keep them dissolved during mitosis. Regulates mTORC1 by mediating the dissolution of stress granules: during stressful conditions, DYRK3 partitions from the cytosol to the stress granule, together with mTORC1 components, which prevents mTORC1 signaling. When stress signals are gone, the kinase activity of DYRK3 is required for the dissolution of stress granule and mTORC1 relocation to the cytosol: acts by mediating the phosphorylation of the mTORC1 inhibitor AKT1S1, allowing full reactivation of mTORC1 signaling. Also acts as a negative regulator of EPO-dependent erythropoiesis: may place an upper limit on red cell production during stress erythropoiesis. Inhibits cell death due to cytokine withdrawal in hematopoietic progenitor cells. Promotes cell survival upon genotoxic stress through phosphorylation of SIRT1: this in turn inhibits p53/TP53 activity and apoptosis. The sequence is that of Dual specificity tyrosine-phosphorylation-regulated kinase 3 from Macaca fascicularis (Crab-eating macaque).